A 281-amino-acid polypeptide reads, in one-letter code: Large ribosomal subunit protein uL2 (281 aa).

Residues 210-281 (RTRYAGQRPH…RGRKRGPHTR (72 aa)) are disordered. Positions 254–281 (TVGKKTRSHKARSNKFIVRGRKRGPHTR) are enriched in basic residues.

The protein belongs to the universal ribosomal protein uL2 family. Part of the 50S ribosomal subunit. Forms a bridge to the 30S subunit in the 70S ribosome.

In terms of biological role, one of the primary rRNA binding proteins. Required for association of the 30S and 50S subunits to form the 70S ribosome, for tRNA binding and peptide bond formation. It has been suggested to have peptidyltransferase activity; this is somewhat controversial. Makes several contacts with the 16S rRNA in the 70S ribosome. The sequence is that of Large ribosomal subunit protein uL2 from Limosilactobacillus reuteri subsp. reuteri (strain JCM 1112) (Lactobacillus reuteri).